We begin with the raw amino-acid sequence, 379 residues long: Mannitol-1-phosphate 5-dehydrogenase (379 aa).

3-14 contributes to the NAD(+) binding site; it reads AVHFGAGNIGRG.

It belongs to the mannitol dehydrogenase family.

It catalyses the reaction D-mannitol 1-phosphate + NAD(+) = beta-D-fructose 6-phosphate + NADH + H(+). The sequence is that of Mannitol-1-phosphate 5-dehydrogenase from Anoxybacillus flavithermus (strain DSM 21510 / WK1).